Consider the following 323-residue polypeptide: Lipoyl synthase (323 aa).

Residues Cys61, Cys66, Cys72, Cys87, Cys91, Cys94, and Ser300 each contribute to the [4Fe-4S] cluster site. A Radical SAM core domain is found at 73–289; sequence WDKKHATFMI…ETVAYSKGFL (217 aa).

It belongs to the radical SAM superfamily. Lipoyl synthase family. [4Fe-4S] cluster serves as cofactor.

The protein resides in the cytoplasm. The enzyme catalyses [[Fe-S] cluster scaffold protein carrying a second [4Fe-4S](2+) cluster] + N(6)-octanoyl-L-lysyl-[protein] + 2 oxidized [2Fe-2S]-[ferredoxin] + 2 S-adenosyl-L-methionine + 4 H(+) = [[Fe-S] cluster scaffold protein] + N(6)-[(R)-dihydrolipoyl]-L-lysyl-[protein] + 4 Fe(3+) + 2 hydrogen sulfide + 2 5'-deoxyadenosine + 2 L-methionine + 2 reduced [2Fe-2S]-[ferredoxin]. The protein operates within protein modification; protein lipoylation via endogenous pathway; protein N(6)-(lipoyl)lysine from octanoyl-[acyl-carrier-protein]: step 2/2. Its function is as follows. Catalyzes the radical-mediated insertion of two sulfur atoms into the C-6 and C-8 positions of the octanoyl moiety bound to the lipoyl domains of lipoate-dependent enzymes, thereby converting the octanoylated domains into lipoylated derivatives. The chain is Lipoyl synthase from Rhizobium etli (strain CIAT 652).